The chain runs to 345 residues: MKFTKPNSRQNKPHVEQKTSRRSTNANAVASKNVKKVTEAQPKSVKASTHSVKPTVKNPLVEGEKLQKVLARAGQGSRREIEAMIAENRVSVDGKIATLGDRIDVHAGVKIRIDGHLINLLHAQKEVCRVLMYYKPEGELCTRHDPEGRPTVFDRLPRLTGSRWIAVGRLDINTSGLLLFTTDGELANRLMHPSREVEREYSVRVFGQVDEAMLHRLKKGVQLEDGPANFKEIKFAGGVGMNQWFDVTLMEGRNREVRRLWESQGVQVSRLIRTRYGNISLMKSLPRGGWEEMDLTNVNYLRELVGLPAEVETKLDVTKPRRRAKTGQIRKAVKRYAELNKRYKK.

The span at 1–10 (MKFTKPNSRQ) shows a compositional bias: polar residues. The disordered stretch occupies residues 1-60 (MKFTKPNSRQNKPHVEQKTSRRSTNANAVASKNVKKVTEAQPKSVKASTHSVKPTVKNPL). The region spanning 64-136 (EKLQKVLARA…VCRVLMYYKP (73 aa)) is the S4 RNA-binding domain. Aspartate 171 acts as the Nucleophile in catalysis.

This sequence belongs to the pseudouridine synthase RsuA family.

The enzyme catalyses uridine(2605) in 23S rRNA = pseudouridine(2605) in 23S rRNA. Functionally, responsible for synthesis of pseudouridine from uracil-2605 in 23S ribosomal RNA. The protein is Ribosomal large subunit pseudouridine synthase B (rluB) of Pasteurella multocida (strain Pm70).